The following is a 231-amino-acid chain: 26S proteasome non-ATPase regulatory subunit 10 (231 aa).

ANK repeat units lie at residues 3 to 36 (GCVS…ATRT), 37 to 69 (DQDS…VNEK), 70 to 102 (DDAG…VNAV), 103 to 135 (NQNG…PDAK), 136 to 168 (NHYD…TNIQ), 169 to 201 (DTEG…IYIE), and 202 to 226 (NKEE…IAES).

In terms of assembly, part of transient complex containing PSMD10, PSMC4, PSMC5 and PAAF1 formed during the assembly of the 26S proteasome. Stays associated throughout the assembly of the PA700/19S RC and is released upon association with the 20S core. Interacts with PSMC4. Interacts with RB1. Interacts with CDK4. Interacts with MDM2. Interacts with RELA. Associates with a CDK4:CCND2 serine/threonine kinase complex. Interacts with ARHGDIA and increases the interaction between ARHGDIA and RHOA, hence promotes ARHGDIA inactivation of RHOA and ROCK.

It is found in the cytoplasm. The protein resides in the nucleus. Its function is as follows. Acts as a chaperone during the assembly of the 26S proteasome, specifically of the PA700/19S regulatory complex (RC). In the initial step of the base subcomplex assembly is part of an intermediate PSMD10:PSMC4:PSMC5:PAAF1 module which probably assembles with a PSMD5:PSMC2:PSMC1:PSMD2 module. Independently of the proteasome, regulates EGF-induced AKT activation through inhibition of the RHOA/ROCK/PTEN pathway, leading to prolonged AKT activation. Plays an important role in RAS-induced tumorigenesis. Functionally, acts as an oncoprotein by being involved in negative regulation of tumor suppressors RB1 and p53/TP53. Overexpression is leading to phosphorylation of RB1 and proteasomal degradation of RB1. Regulates CDK4-mediated phosphorylation of RB1 by competing with CDKN2A for binding with CDK4. Facilitates binding of MDM2 to p53/TP53 and the mono- and polyubiquitination of p53/TP53 by MDM2 suggesting a function in targeting the TP53:MDM2 complex to the 26S proteasome. Involved in p53-independent apoptosis. Involved in regulation of NF-kappa-B by retaining it in the cytoplasm. Binds to the NF-kappa-B component RELA and accelerates its XPO1/CRM1-mediated nuclear export. This is 26S proteasome non-ATPase regulatory subunit 10 (Psmd10) from Rattus norvegicus (Rat).